We begin with the raw amino-acid sequence, 206 residues long: MTPIQEQLIALGGVFQAAVLVDRIAKTGQVSEAALSCMLGSLLVVDPKDTLDVYGGDDLNLHEGYRAMASALERDPATLQREPLRYALSMLGLERQLAKRDDLLEIIGKRIPVIQSQVEHFGIAHENVIAATGALYEDTLSTLRQRIQVQGDMRNLQQPNNASKIRAILLAGIRSARLWRQVGGHRWQLVFSRRKLLKELYPLLHG.

It belongs to the HflD family.

It is found in the cytoplasm. The protein localises to the cell inner membrane. In Pseudomonas syringae pv. tomato (strain ATCC BAA-871 / DC3000), this protein is High frequency lysogenization protein HflD homolog.